The following is a 150-amino-acid chain: Ribonuclease HI (150 aa).

Positions 1 to 142 constitute an RNase H type-1 domain; that stretch reads MSDSVELFTD…ADQLANRGVD (142 aa). Mg(2+)-binding residues include Asp-10, Glu-48, Asp-70, and Asp-134.

It belongs to the RNase H family. As to quaternary structure, monomer. Requires Mg(2+) as cofactor.

The protein resides in the cytoplasm. The enzyme catalyses Endonucleolytic cleavage to 5'-phosphomonoester.. Endonuclease that specifically degrades the RNA of RNA-DNA hybrids. This is Ribonuclease HI from Pseudomonas syringae pv. tomato (strain ATCC BAA-871 / DC3000).